A 101-amino-acid chain; its full sequence is Small ribosomal subunit protein uS14 (101 aa).

Belongs to the universal ribosomal protein uS14 family. As to quaternary structure, part of the 30S ribosomal subunit. Contacts proteins S3 and S10.

Functionally, binds 16S rRNA, required for the assembly of 30S particles and may also be responsible for determining the conformation of the 16S rRNA at the A site. The protein is Small ribosomal subunit protein uS14 of Corynebacterium efficiens (strain DSM 44549 / YS-314 / AJ 12310 / JCM 11189 / NBRC 100395).